We begin with the raw amino-acid sequence, 185 residues long: Ribosome-recycling factor (185 aa).

Belongs to the RRF family.

The protein localises to the cytoplasm. Responsible for the release of ribosomes from messenger RNA at the termination of protein biosynthesis. May increase the efficiency of translation by recycling ribosomes from one round of translation to another. This Acidothermus cellulolyticus (strain ATCC 43068 / DSM 8971 / 11B) protein is Ribosome-recycling factor.